Consider the following 431-residue polypeptide: Adenylosuccinate synthetase (431 aa).

Residues 13–19 (GDEGKGK) and 41–43 (GHT) contribute to the GTP site. Aspartate 14 functions as the Proton acceptor in the catalytic mechanism. Aspartate 14 and glycine 41 together coordinate Mg(2+). IMP-binding positions include 14–17 (DEGK), 39–42 (NAGH), threonine 130, arginine 144, glutamine 225, threonine 240, and arginine 304. The active-site Proton donor is histidine 42. Position 300 to 306 (300 to 306 (ATTGRAR)) interacts with substrate. Residues arginine 306, 332 to 334 (KLD), and 415 to 417 (STG) each bind GTP.

The protein belongs to the adenylosuccinate synthetase family. Homodimer. The cofactor is Mg(2+).

It is found in the cytoplasm. It catalyses the reaction IMP + L-aspartate + GTP = N(6)-(1,2-dicarboxyethyl)-AMP + GDP + phosphate + 2 H(+). The protein operates within purine metabolism; AMP biosynthesis via de novo pathway; AMP from IMP: step 1/2. Plays an important role in the de novo pathway of purine nucleotide biosynthesis. Catalyzes the first committed step in the biosynthesis of AMP from IMP. The sequence is that of Adenylosuccinate synthetase from Ectopseudomonas mendocina (strain ymp) (Pseudomonas mendocina).